Here is a 363-residue protein sequence, read N- to C-terminus: Osmoprotective compounds uptake ATP-binding protein GgtA (363 aa).

Residues 4–234 (VSFEQVTKQF…PANLFVAGFI (231 aa)) enclose the ABC transporter domain. 36-43 (GPSGCGKT) is an ATP binding site.

Belongs to the ABC transporter superfamily. The complex is composed of two ATP-binding proteins (GgtA), two transmembrane proteins (GgtC and GgtD) and a solute-binding protein (GgtB).

It is found in the cell membrane. Part of the ABC transporter complex GgtABCD involved in the uptake of the osmoprotective compounds glucosylglycerol (GG), sucrose and trehalose. Responsible for energy coupling to the transport system. The sequence is that of Osmoprotective compounds uptake ATP-binding protein GgtA from Synechocystis sp. (strain ATCC 27184 / PCC 6803 / Kazusa).